A 423-amino-acid chain; its full sequence is MAAPRVFPLSCAVQQYAWGKMGSNSEVARLLASSDPLAQIAEDKPYAELWMGTHPRGDAKILDNRISQKTLSQWIAENQDSLGSKVKDTFNGNLPFLFKVLSVETPLSIQAHPNKELAEKLHLQAPQHYPDANHKPEMAIALTPFQGLCGFRPVEEIVTFLKKVPEFQFLIGDEAATHLKQTMSHDSQAVASSLQSCFSHLMKSEKKVVVEQLNLLVKRISQQAAAGNNMEDIFGELLLQLHQQYPGDIGCFAIYFLNLLTLKPGEAMFLEANVPHAYLKGDCVECMACSDNTVRAGLTPKFIDVPTLCEMLSYTPSSSKDRLFLPTRSREDPYLSIYDPPVPDFTIMKTEVPGSVTGYKVLALDSASILLMVQGTVIASTPTTQTPIPLQRGGVLFIGANESVSLKLTEPKDLLIFRACCLL.

Alanine 2 carries the post-translational modification N-acetylalanine. Phosphoserine is present on residues serine 102 and serine 108. The Zn(2+) site is built by glutamine 110, histidine 112, glutamate 137, and histidine 276. The active site involves arginine 295.

Belongs to the mannose-6-phosphate isomerase type 1 family. Zn(2+) serves as cofactor.

It is found in the cytoplasm. It catalyses the reaction D-mannose 6-phosphate = D-fructose 6-phosphate. Its pathway is nucleotide-sugar biosynthesis; GDP-alpha-D-mannose biosynthesis; alpha-D-mannose 1-phosphate from D-fructose 6-phosphate: step 1/2. Its function is as follows. Isomerase that catalyzes the interconversion of fructose-6-P and mannose-6-P and has a critical role in the supply of D-mannose derivatives required for many eukaryotic glycosylation reactions. In Pan troglodytes (Chimpanzee), this protein is Mannose-6-phosphate isomerase (MPI).